We begin with the raw amino-acid sequence, 227 residues long: Terpene cyclase ltmB (227 aa).

7 helical membrane-spanning segments follow: residues 20 to 40 (LAETFVTFMGLGWLINYVLMI), 51 to 71 (MALIPLCNNIAWELVYTIIYP), 76 to 96 (VELAAFIAGVTLNFLIMTSAA), 113 to 133 (AGLIIVAGILMCFTGHVALAM), 135 to 155 (IGPALAYSWGAVICQLALSIG), 173 to 195 (LWSSRFLGSCCAVGFAFLRWRYW), and 206 to 226 (LILWSLATFLVADLTYGVCLL).

It belongs to the paxB family.

It is found in the membrane. It functions in the pathway secondary metabolite biosynthesis. Functionally, terpene cyclase; part of the gene cluster that mediates the biosynthesis of lolitrems, indole-diterpene mycotoxins that are potent tremorgens in mammals, and are synthesized by clavicipitaceous fungal endophytes in association with their grass hosts. The geranylgeranyl diphosphate (GGPP) synthase ltmG is proposed to catalyze the first step in lolitrem biosynthesis. LtmG catalyzes a series of iterative condensations of isopentenyl diphosphate (IPP) with dimethylallyl diphosphate (DMAPP), geranyl diphosphate (GPP), and farnesyl diphosphate (FPP), to form GGPP. GGPP then condenses with indole-3-glycerol phosphate to form 3-geranylgeranylindole, an acyclic intermediate, to be incorporated into paxilline. Either ltmG or ltmC could be responsible for this step, as both are putative prenyl transferases. The FAD-dependent monooxygenase ltmM then catalyzes the epoxidation of the two terminal alkenes of the geranylgeranyl moiety, which is subsequently cyclized by ltmB, to paspaline. The cytochrome P450 monooxygenases ltmQ and ltmP can sequentially oxidize paspaline to terpendole E and terpendole F. Alternatively, ltmP converts paspaline to an intermediate which is oxidized by ltmQ to terpendole F. LtmF, ltmK, ltmE and ltmJ appear to be unique to the epichloe endophytes. The prenyltransferase ltmF is involved in the 27-hydroxyl-O-prenylation. The cytochrome P450 monooxygenase ltmK is required for the oxidative acetal ring formation. The multi-functional prenyltransferase ltmE is required for C20- and C21-prenylations of the indole ring of paspalanes and acts together with the cytochrome P450 monooxygenase ltmJ to yield lolitremanes by multiple oxidations and ring closures. The stereoisomer pairs of lolitriol and lolitrem N or lolitrem B and lolitrem F may be attributed to variations in the way in which ring closure can occur under the action of ltmJ. While the major product of this pathway is lolitrem B, the prenyl transferases and cytochrome P450 monooxygenases identified in this pathway have a remarkable versatility in their regio- and stereo-specificities to generate a diverse range of metabolites that are products of a metabolic grid rather than a linear pathway. The protein is Terpene cyclase ltmB of Epichloe festucae var. lolii (Neotyphodium lolii).